A 204-amino-acid polypeptide reads, in one-letter code: MRG/MORF4L-binding protein (204 aa).

Over residues 1 to 15 (MGEAEVGGTGAPGDK) the composition is skewed to gly residues. The segment at 1 to 27 (MGEAEVGGTGAPGDKGPGEAAPSPAEE) is disordered. Gly-2 is subject to N-acetylglycine. Ser-23 is modified (phosphoserine). Residue Lys-127 forms a Glycyl lysine isopeptide (Lys-Gly) (interchain with G-Cter in SUMO2) linkage. Composition is skewed to basic and acidic residues over residues 128–140 (EEMKEDVDPHSGA) and 153–175 (ALEKSSKDKEKNSSDLGCKEGAD). The interval 128–204 (EEMKEDVDPH…SPSAAKRRRT (77 aa)) is disordered. The segment covering 189–198 (ANSNPSSPSA) has biased composition (low complexity). 2 positions are modified to phosphoserine: Ser-191 and Ser-195.

Belongs to the EAF7 family. In terms of assembly, component of the NuA4 histone acetyltransferase complex which contains the catalytic subunit KAT5/TIP60 and the subunits EP400, TRRAP/PAF400, BRD8/SMAP, EPC1, DMAP1/DNMAP1, RUVBL1/TIP49, RUVBL2, ING3, actin, ACTL6A/BAF53A, MORF4L1/MRG15, MORF4L2/MRGX, MRGBP, YEATS4/GAS41, VPS72/YL1 and MEAF6. MRGBP may interact directly with MORF4L1/MRG15 and MORF4L2/MRGX.

The protein localises to the nucleus. Component of the NuA4 histone acetyltransferase (HAT) complex which is involved in transcriptional activation of select genes principally by acetylation of nucleosomal histones H4 and H2A. This modification may both alter nucleosome - DNA interactions and promote interaction of the modified histones with other proteins which positively regulate transcription. This complex may be required for the activation of transcriptional programs associated with oncogene and proto-oncogene mediated growth induction, tumor suppressor mediated growth arrest and replicative senescence, apoptosis, and DNA repair. NuA4 may also play a direct role in DNA repair when recruited to sites of DNA damage. This chain is MRG/MORF4L-binding protein (Mrgbp), found in Mus musculus (Mouse).